A 445-amino-acid chain; its full sequence is Tubulin beta chain (445 aa).

GTP contacts are provided by Gln-11, Glu-69, Ser-138, Gly-142, Thr-143, Gly-144, Asn-205, and Asn-227. Glu-69 lines the Mg(2+) pocket.

This sequence belongs to the tubulin family. As to quaternary structure, dimer of alpha and beta chains. A typical microtubule is a hollow water-filled tube with an outer diameter of 25 nm and an inner diameter of 15 nM. Alpha-beta heterodimers associate head-to-tail to form protofilaments running lengthwise along the microtubule wall with the beta-tubulin subunit facing the microtubule plus end conferring a structural polarity. Microtubules usually have 13 protofilaments but different protofilament numbers can be found in some organisms and specialized cells. Mg(2+) serves as cofactor.

The protein resides in the cytoplasm. It is found in the cytoskeleton. Functionally, tubulin is the major constituent of microtubules, a cylinder consisting of laterally associated linear protofilaments composed of alpha- and beta-tubulin heterodimers. Microtubules grow by the addition of GTP-tubulin dimers to the microtubule end, where a stabilizing cap forms. Below the cap, tubulin dimers are in GDP-bound state, owing to GTPase activity of alpha-tubulin. This is Tubulin beta chain (TUB2) from Ajellomyces capsulatus (Darling's disease fungus).